The chain runs to 264 residues: Glutamate racemase (264 aa).

Substrate is bound by residues 10 to 11 (DS) and 42 to 43 (YG). C73 acts as the Proton donor/acceptor in catalysis. 74–75 (NT) contributes to the substrate binding site. The active-site Proton donor/acceptor is C183. Residue 184–185 (TH) participates in substrate binding.

The protein belongs to the aspartate/glutamate racemases family.

It carries out the reaction L-glutamate = D-glutamate. The protein operates within cell wall biogenesis; peptidoglycan biosynthesis. Functionally, provides the (R)-glutamate required for cell wall biosynthesis. This is Glutamate racemase from Streptococcus uberis (strain ATCC BAA-854 / 0140J).